The following is a 474-amino-acid chain: L-arabinose isomerase (474 aa).

Mn(2+) contacts are provided by Glu-306, Glu-331, His-348, and His-447.

This sequence belongs to the arabinose isomerase family. It depends on Mn(2+) as a cofactor.

The catalysed reaction is beta-L-arabinopyranose = L-ribulose. Its pathway is carbohydrate degradation; L-arabinose degradation via L-ribulose; D-xylulose 5-phosphate from L-arabinose (bacterial route): step 1/3. Its function is as follows. Catalyzes the conversion of L-arabinose to L-ribulose. This Lactiplantibacillus plantarum (strain ATCC BAA-793 / NCIMB 8826 / WCFS1) (Lactobacillus plantarum) protein is L-arabinose isomerase.